The chain runs to 311 residues: tRNA dimethylallyltransferase (311 aa).

Residue 14-21 (GPTAVGKT) coordinates ATP. 16–21 (TAVGKT) is a substrate binding site. Positions 39–42 (DSMQ) are interaction with substrate tRNA.

It belongs to the IPP transferase family. As to quaternary structure, monomer. Mg(2+) serves as cofactor.

The enzyme catalyses adenosine(37) in tRNA + dimethylallyl diphosphate = N(6)-dimethylallyladenosine(37) in tRNA + diphosphate. In terms of biological role, catalyzes the transfer of a dimethylallyl group onto the adenine at position 37 in tRNAs that read codons beginning with uridine, leading to the formation of N6-(dimethylallyl)adenosine (i(6)A). The chain is tRNA dimethylallyltransferase from Lactiplantibacillus plantarum (strain ATCC BAA-793 / NCIMB 8826 / WCFS1) (Lactobacillus plantarum).